The chain runs to 1221 residues: WEB family protein At4g27595, chloroplastic (1221 aa).

The segment at 1–68 is disordered; that stretch reads MASRTKTGLM…VSDRRTARVP (68 aa). A chloroplast-targeting transit peptide spans 1 to 82; it reads MASRTKTGLM…ANYFLIIICM (82 aa). The segment covering 32 to 58 has biased composition (polar residues); it reads SDGNSPSPVQSTRLSIDRSPQTVNSKP. Coiled coils occupy residues 95-149, 202-543, and 587-1084; these read TGLL…AAQH, TEEL…FNSK, and AAKE…GEEI. Basic and acidic residues predominate over residues 1073–1083; the sequence is EASSTHEKGEE. The tract at residues 1073–1221 is disordered; the sequence is EASSTHEKGE…LLKKKSSSQK (149 aa). Residues 1084–1097 are compositionally biased toward polar residues; that stretch reads ITNTNPFDNSTGEQ. Basic and acidic residues-rich tracts occupy residues 1106–1116 and 1129–1160; these read AIDRHLKDDTT and KGEKGKDKDTVESEVYHLEKREASSERDTEHD. The segment covering 1175–1187 has biased composition (polar residues); it reads NFDQLSNGLSLAE.

The protein belongs to the WEB family.

The protein resides in the plastid. The protein localises to the chloroplast. This chain is WEB family protein At4g27595, chloroplastic, found in Arabidopsis thaliana (Mouse-ear cress).